Reading from the N-terminus, the 443-residue chain is Xaa-Pro dipeptidase (443 aa).

Mn(2+) contacts are provided by Asp246, Asp257, His339, Glu384, and Glu423.

Belongs to the peptidase M24B family. Bacterial-type prolidase subfamily. Mn(2+) serves as cofactor.

The enzyme catalyses Xaa-L-Pro dipeptide + H2O = an L-alpha-amino acid + L-proline. In terms of biological role, splits dipeptides with a prolyl residue in the C-terminal position. This Escherichia fergusonii (strain ATCC 35469 / DSM 13698 / CCUG 18766 / IAM 14443 / JCM 21226 / LMG 7866 / NBRC 102419 / NCTC 12128 / CDC 0568-73) protein is Xaa-Pro dipeptidase.